The sequence spans 253 residues: 5-oxoprolinase subunit A (253 aa).

Belongs to the LamB/PxpA family. In terms of assembly, forms a complex composed of PxpA, PxpB and PxpC.

The enzyme catalyses 5-oxo-L-proline + ATP + 2 H2O = L-glutamate + ADP + phosphate + H(+). Catalyzes the cleavage of 5-oxoproline to form L-glutamate coupled to the hydrolysis of ATP to ADP and inorganic phosphate. The sequence is that of 5-oxoprolinase subunit A from Bacillus anthracis (strain A0248).